The following is a 316-amino-acid chain: L-lactate dehydrogenase 3 (316 aa).

The NAD(+) site is built by Val16, Asp37, Arg42, and Tyr68. Arg91 contacts substrate. Residues Ser104, 121–123 (ASN), and Thr146 contribute to the NAD(+) site. Residue 123-126 (NPVD) coordinates substrate. 151 to 154 (DSSR) contacts substrate. The beta-D-fructose 1,6-bisphosphate site is built by Arg156 and His171. The active-site Proton acceptor is the His178. Thr233 is a substrate binding site.

The protein belongs to the LDH/MDH superfamily. LDH family. In terms of assembly, homotetramer.

The protein localises to the cytoplasm. The enzyme catalyses (S)-lactate + NAD(+) = pyruvate + NADH + H(+). It functions in the pathway fermentation; pyruvate fermentation to lactate; (S)-lactate from pyruvate: step 1/1. Allosterically activated by fructose 1,6-bisphosphate (FBP). Catalyzes the conversion of lactate to pyruvate. The polypeptide is L-lactate dehydrogenase 3 (Bacillus cereus (strain ATCC 14579 / DSM 31 / CCUG 7414 / JCM 2152 / NBRC 15305 / NCIMB 9373 / NCTC 2599 / NRRL B-3711)).